We begin with the raw amino-acid sequence, 307 residues long: MGRLSKLRIVDPVLTNLAIGYTNAEFIGQSLMPVVEVEKEGGKIPKFGKESFRLYKTERALRARSNRMNPEDLGSIDIVLDEHDLEYPIDYREDQESAFPLEQAAVQTATEAIQLRREKMVADLAQNPNSYAGGNKKQLSATEKFTAAGSDPVGVIEDGKEAIRTKIGRRPNTMVIGASAYKTLKAHPQLIEKIKYSMKGIVTVDLLKEIFEVENIAVGEAIYADDKDRFTDIWGANIVLAYVPLQRGGQQRTPYEPSYGYTLRKKGNPVVDTRIEDGKLELVRSTDIFRPYLLGADAGYLISGING.

It belongs to the lambda phage major capsid protein family.

It localises to the virion. The protein resides in the host cytoplasm. Its function is as follows. Assembles to form an icosahedral capsid. This chain is Major capsid protein, found in Burkholderia cenocepacia (strain ATCC BAA-245 / DSM 16553 / LMG 16656 / NCTC 13227 / J2315 / CF5610) (Burkholderia cepacia (strain J2315)).